The chain runs to 444 residues: UDP-N-acetylmuramate--L-alanine ligase (444 aa).

111–117 contributes to the ATP binding site; the sequence is GAHGKTS.

The protein belongs to the MurCDEF family.

It is found in the cytoplasm. The catalysed reaction is UDP-N-acetyl-alpha-D-muramate + L-alanine + ATP = UDP-N-acetyl-alpha-D-muramoyl-L-alanine + ADP + phosphate + H(+). The protein operates within cell wall biogenesis; peptidoglycan biosynthesis. Cell wall formation. The chain is UDP-N-acetylmuramate--L-alanine ligase from Leuconostoc citreum (strain KM20).